The following is a 310-amino-acid chain: Putative olfactory receptor 7A2 (310 aa).

Over 1-26 the chain is Extracellular; sequence MVKAGNETQISEFLLLGFSEKQELQP. A glycan (N-linked (GlcNAc...) asparagine) is linked at Asn6. A helical transmembrane segment spans residues 27–47; sequence FLFGLFLSMYLVTVLGNLLII. Topologically, residues 48-55 are cytoplasmic; sequence LAAISDSC. A helical transmembrane segment spans residues 56–76; it reads LHTPMYFFLSNLSFVDICFAS. Topologically, residues 77–100 are extracellular; that stretch reads TMVPKMLVNIQTQSKVITYAGCIT. Cys98 and Cys190 form a disulfide bridge. The helical transmembrane segment at 101 to 121 threads the bilayer; it reads QMCFFVLFIVLDSLLLTVMAY. Residues 122–140 are Cytoplasmic-facing; sequence DQFVAICHPLHYTVIMSPQ. A helical membrane pass occupies residues 141–161; sequence LCGLLVLVSWIMSVLNSMLQS. The Extracellular segment spans residues 162–198; that stretch reads LVTLQLSFCTDLEIPHFFCELNEMIHLACSDTFVNNM. The chain crosses the membrane as a helical span at residues 199-218; sequence VMHFAAVLLDGGPLVGILYS. The Cytoplasmic segment spans residues 219 to 238; the sequence is YCRIVSSIRAISSTQGKYKA. Residues 239–259 traverse the membrane as a helical segment; sequence LSTCASHLSVVSIFYGTGLGV. At 260 to 272 the chain is on the extracellular side; the sequence is YLSSTMTQNLHST. The chain crosses the membrane as a helical span at residues 273 to 293; it reads AVASVMYTVVTPMLNPFIYSL. The Cytoplasmic portion of the chain corresponds to 294–310; that stretch reads RNKDIKGALTQFFRGKQ.

Belongs to the G-protein coupled receptor 1 family.

The protein localises to the cell membrane. Odorant receptor. In Homo sapiens (Human), this protein is Putative olfactory receptor 7A2 (OR7A2P).